A 251-amino-acid chain; its full sequence is Prolactin-7C1 (251 aa).

Positions 1–30 (MLLSLTHPSFLAMLPMLLMSNLLQWEGVTS) are cleaved as a signal peptide. N-linked (GlcNAc...) asparagine glycosylation is present at asparagine 57. 2 disulfides stabilise this stretch: cysteine 101-cysteine 217 and cysteine 234-cysteine 242.

It belongs to the somatotropin/prolactin family. As to expression, expressed exclusively in the placenta. Expressed in spongiotrophoblast cells and trophoblast giant cells of the junctional zone and in labyrinthine trophoblast.

The protein resides in the secreted. This chain is Prolactin-7C1 (Prl7c1), found in Mus musculus (Mouse).